The primary structure comprises 122 residues: Large ribosomal subunit protein uL18 (122 aa).

It belongs to the universal ribosomal protein uL18 family. As to quaternary structure, part of the 50S ribosomal subunit; part of the 5S rRNA/L5/L18/L25 subcomplex. Contacts the 5S and 23S rRNAs.

Its function is as follows. This is one of the proteins that bind and probably mediate the attachment of the 5S RNA into the large ribosomal subunit, where it forms part of the central protuberance. The sequence is that of Large ribosomal subunit protein uL18 from Lachnospira eligens (strain ATCC 27750 / DSM 3376 / VPI C15-48 / C15-B4) (Eubacterium eligens).